The sequence spans 160 residues: Nucleotide-binding protein Bpet3698 (160 aa).

Belongs to the YajQ family.

Its function is as follows. Nucleotide-binding protein. This is Nucleotide-binding protein Bpet3698 from Bordetella petrii (strain ATCC BAA-461 / DSM 12804 / CCUG 43448).